The following is a 284-amino-acid chain: Peflin (284 aa).

The segment at 1 to 111 is disordered; it reads MASYPYRQGC…QPGLYGQGGA (111 aa). The span at 8 to 26 shows a compositional bias: low complexity; it reads QGCPGAAGQAPGAPPGSYY. 9 repeat units span residues 21–29, 31–39, 41–49, 50–58, 59–67, 76–84, 85–92, 93–100, and 101–109. Residues 21–109 form a 9 X 9 AA approximate tandem repeat of [AP]-P-G-G-P-Y-G-G-P-P region; that stretch reads PPGSYYPGPP…AQQPGLYGQG (89 aa). Positions 34–50 are enriched in gly residues; the sequence is GQYGSGLPPGGGYGGPA. Over residues 65 to 75 the composition is skewed to low complexity; it reads GHPNPGMFPSG. Gly residues predominate over residues 76-90; the sequence is TPGGPYGGAAPGGPY. EF-hand domains follow at residues 114-149, 155-183, 181-216, 217-253, and 254-283; these read NVDP…CNWS, TCLM…WKFI, KFIQ…MGYN, LSPQ…LQVL, and TEAF…ASRM. Ca(2+) is bound by residues Asp-127, Asp-129, Ser-131, and Tyr-133. Lys-137 participates in a covalent cross-link: Glycyl lysine isopeptide (Lys-Gly) (interchain with G-Cter in ubiquitin). Glu-138 is a binding site for Ca(2+). Positions 194, 196, 198, 200, and 205 each coordinate Ca(2+). Residues 204 to 284 form a required for interaction with PDCD6 region; the sequence is TELQQALSQM…FVTMTASRML (81 aa).

As to quaternary structure, heterodimer; heterodimerizes (via the EF-hand 5) with PDCD6. Dissociates from PDCD6 in presence of calcium. Post-translationally, ubiquitinated by the BCR(KLHL12) E3 ubiquitin ligase complex.

The protein localises to the cytoplasm. It localises to the endoplasmic reticulum. It is found in the membrane. Its subcellular location is the cytoplasmic vesicle. The protein resides in the COPII-coated vesicle membrane. Calcium-binding protein that acts as an adapter that bridges unrelated proteins or stabilizes weak protein-protein complexes in response to calcium. Together with PDCD6, acts as a calcium-dependent adapter for the BCR(KLHL12) complex, a complex involved in endoplasmic reticulum (ER)-Golgi transport by regulating the size of COPII coats. In response to cytosolic calcium increase, the heterodimer formed with PDCD6 interacts with, and bridges together the BCR(KLHL12) complex and SEC31 (SEC31A or SEC31B), promoting monoubiquitination of SEC31 and subsequent collagen export, which is required for neural crest specification. Its role in the heterodimer formed with PDCD6 is however unclear: some evidence shows that PEF1 and PDCD6 work together and promote association between PDCD6 and SEC31 in presence of calcium. Other reports show that PEF1 dissociates from PDCD6 in presence of calcium, and may act as a negative regulator of PDCD6. Also acts as a negative regulator of ER-Golgi transport; possibly by inhibiting interaction between PDCD6 and SEC31. The polypeptide is Peflin (Homo sapiens (Human)).